We begin with the raw amino-acid sequence, 423 residues long: F-box/LRR-repeat protein 2 (423 aa).

An F-box domain is found at 9-55; the sequence is GRINKKLPKELLLRIFSFLDIVTLCRCAQISKAWNILALDGSNWQRI. LRR repeat units lie at residues 61-87, 88-113, 114-139, 140-165, 166-191, 192-217, 218-243, 244-269, 270-295, 296-321, 322-350, 351-375, and 376-401; these read QTDV…SLRG, CIGV…NLNG, CTKI…DLTS, CVSI…NLSW, CDQI…LLRG, CTQL…NLQS, CSRI…CLSG, CSNL…EAAR, CSHL…DLEE, CILI…SLSH, CELI…ELDN, CLLI…ELYD, and CQQV…AYFA. Positions 80 to 90 are interaction with Calmodulin; the sequence is LRKLSLRGCIG. Lysine 201 participates in a covalent cross-link: Glycyl lysine isopeptide (Lys-Gly) (interchain with G-Cter in ubiquitin). Threonine 404 is subject to Phosphothreonine. Cysteine 420 carries the S-geranylgeranyl cysteine lipid modification. A CAAX motif motif is present at residues 420-423; the sequence is CVIL.

In terms of assembly, part of the SCF (SKP1-CUL1-F-box) E3 ubiquitin-protein ligase complex SCF(FBXL2) composed of CUL1, SKP1, RBX1 and FBXL2. Interacts with calmodulin; may antagonize substrate ubiquitination by SCF(FBXL2). May interact with PIK3R1. Interacts with PTPN13. Post-translationally, phosphorylated by GSK-beta (GSK3B), promoting recognition by FBXO3, leading to its ubiquitination by the SCF(FBXO3) complex. In terms of processing, ubiquitinated at Lys-201 by the SCF(FBXO3) complex in response to lipopolysaccharide (LPS), leading to its degradation by the proteasome.

It is found in the membrane. The protein operates within protein modification; protein ubiquitination. In terms of biological role, calcium-activated substrate recognition component of the SCF (SKP1-cullin-F-box protein) E3 ubiquitin-protein ligase complex, SCF(FBXL2), which mediates the ubiquitination and subsequent proteasomal degradation of target proteins. Unlike many F-box proteins, FBXL2 does not seem to target phosphodegron within its substrates but rather calmodulin-binding motifs and is thereby antagonized by calmodulin. This is the case for the cyclins CCND2 and CCND3 which polyubiquitination and subsequent degradation are inhibited by calmodulin. Through CCND2 and CCND3 degradation induces cell-cycle arrest in G(0). SCF(FBXL2) also mediates PIK3R2 ubiquitination and proteasomal degradation thereby regulating phosphatidylinositol 3-kinase signaling and autophagy. PCYT1A monoubiquitination by SCF(FBXL2) and subsequent degradation regulates synthesis of phosphatidylcholine, which is utilized for formation of membranes and of pulmonary surfactant. The SCF(FBXL2) complex acts as a regulator of inflammation by mediating ubiquitination and degradation of TRAF proteins (TRAF1, TRAF2, TRAF3, TRAF4, TRAF5 and TRAF6). The SCF(FBXL2) complex acts as a negative regulator of the NLRP3 inflammasome by mediating ubiquitination and degradation of NLRP3. This Pongo abelii (Sumatran orangutan) protein is F-box/LRR-repeat protein 2.